A 353-amino-acid polypeptide reads, in one-letter code: Nicotinate-nucleotide--dimethylbenzimidazole phosphoribosyltransferase (353 aa).

Glu320 acts as the Proton acceptor in catalysis.

Belongs to the CobT family.

The enzyme catalyses 5,6-dimethylbenzimidazole + nicotinate beta-D-ribonucleotide = alpha-ribazole 5'-phosphate + nicotinate + H(+). Its pathway is nucleoside biosynthesis; alpha-ribazole biosynthesis; alpha-ribazole from 5,6-dimethylbenzimidazole: step 1/2. Its function is as follows. Catalyzes the synthesis of alpha-ribazole-5'-phosphate from nicotinate mononucleotide (NAMN) and 5,6-dimethylbenzimidazole (DMB). This chain is Nicotinate-nucleotide--dimethylbenzimidazole phosphoribosyltransferase, found in Pseudoalteromonas translucida (strain TAC 125).